The primary structure comprises 394 residues: MNKKSIRDVDLKGKRVFCRVDFNVPMKEGKITDETRIRAALPTIQYLVEQGAKVILASHLGRPKGQVVEEMRLTPVAARLGELLGKDVKKADEAFGPVAQEMVAAMNEGDVLVLENVRFYAGEEKNDAELAKEFAALADIFVNDAFGAAHRAHASTAGIADYLPAVSGLLMEKELDVLGKALSNPERPFTAIIGGAKVKDKIGVIRHLLDKVDNLIIGGGLAYTFVKALGHEIGLSLCEDDKIELAKEFMQLAKEKGVNFYMPVDVVITEEFSETATTKIVGIDSIPSNWEGVDIGPKTREIYADVIKNSKLVVWNGPMGVFEMTPFAEGTKAVGQALADAEDTYSVIGGGDSAAAVEKFGMADKMSHISTGGGASLEFMEGKELPGVVCLNDK.

Substrate is bound by residues 21–23, arginine 36, 59–62, arginine 118, and arginine 151; these read DFN and HLGR. The residue at position 183 (serine 183) is a Phosphoserine. ATP contacts are provided by lysine 201 and glycine 292. Threonine 299 is subject to Phosphothreonine. ATP contacts are provided by residues glutamate 323 and 350–353; that span reads GGDS.

This sequence belongs to the phosphoglycerate kinase family. Monomer.

The protein localises to the cytoplasm. The enzyme catalyses (2R)-3-phosphoglycerate + ATP = (2R)-3-phospho-glyceroyl phosphate + ADP. It functions in the pathway carbohydrate degradation; glycolysis; pyruvate from D-glyceraldehyde 3-phosphate: step 2/5. The polypeptide is Phosphoglycerate kinase (Bacillus cereus (strain B4264)).